The primary structure comprises 966 residues: Valine--tRNA ligase (966 aa).

The 'HIGH' region motif lies at 48–58 (PNITGGLHLGH). Positions 348–368 (DYKDARKKIIEECKRLKILED) form a coiled coil. The short motif at 566–570 (KMSKS) is the 'KMSKS' region element. K569 contributes to the ATP binding site. Residues 939–960 (FKKSQEKLNHYNKTKNKLLNQY) are a coiled coil.

The protein belongs to the class-I aminoacyl-tRNA synthetase family. ValS type 1 subfamily. As to quaternary structure, monomer.

It localises to the cytoplasm. It carries out the reaction tRNA(Val) + L-valine + ATP = L-valyl-tRNA(Val) + AMP + diphosphate. In terms of biological role, catalyzes the attachment of valine to tRNA(Val). As ValRS can inadvertently accommodate and process structurally similar amino acids such as threonine, to avoid such errors, it has a 'posttransfer' editing activity that hydrolyzes mischarged Thr-tRNA(Val) in a tRNA-dependent manner. The polypeptide is Valine--tRNA ligase (Blochmanniella floridana).